We begin with the raw amino-acid sequence, 456 residues long: Bifunctional protein GlmU (456 aa).

The tract at residues 1 to 228 is pyrophosphorylase; it reads MKLKAIILAA…YEDIMAVNSR (228 aa). Residues 8–11, Lys-22, Gln-72, 77–78, 99–101, Gly-138, Glu-153, Asn-168, and Asn-226 contribute to the UDP-N-acetyl-alpha-D-glucosamine site; these read LAAG, GT, and YGD. Residue Asp-101 participates in Mg(2+) binding. Asn-226 contributes to the Mg(2+) binding site. Residues 229-249 are linker; the sequence is EQLAEVEEVMQRRIVKKHMEA. Residues 250–456 are N-acetyltransferase; sequence GVTFIDPQST…WVARKGVGKK (207 aa). Arg-331 and Lys-349 together coordinate UDP-N-acetyl-alpha-D-glucosamine. His-361 acts as the Proton acceptor in catalysis. Residues Tyr-364 and Asn-375 each coordinate UDP-N-acetyl-alpha-D-glucosamine. Acetyl-CoA-binding positions include 384–385, Ser-403, Ser-421, and Arg-438; that span reads NY.

This sequence in the N-terminal section; belongs to the N-acetylglucosamine-1-phosphate uridyltransferase family. It in the C-terminal section; belongs to the transferase hexapeptide repeat family. As to quaternary structure, homotrimer. Requires Mg(2+) as cofactor.

The protein resides in the cytoplasm. It catalyses the reaction alpha-D-glucosamine 1-phosphate + acetyl-CoA = N-acetyl-alpha-D-glucosamine 1-phosphate + CoA + H(+). It carries out the reaction N-acetyl-alpha-D-glucosamine 1-phosphate + UTP + H(+) = UDP-N-acetyl-alpha-D-glucosamine + diphosphate. It participates in nucleotide-sugar biosynthesis; UDP-N-acetyl-alpha-D-glucosamine biosynthesis; N-acetyl-alpha-D-glucosamine 1-phosphate from alpha-D-glucosamine 6-phosphate (route II): step 2/2. The protein operates within nucleotide-sugar biosynthesis; UDP-N-acetyl-alpha-D-glucosamine biosynthesis; UDP-N-acetyl-alpha-D-glucosamine from N-acetyl-alpha-D-glucosamine 1-phosphate: step 1/1. Its pathway is bacterial outer membrane biogenesis; LPS lipid A biosynthesis. Functionally, catalyzes the last two sequential reactions in the de novo biosynthetic pathway for UDP-N-acetylglucosamine (UDP-GlcNAc). The C-terminal domain catalyzes the transfer of acetyl group from acetyl coenzyme A to glucosamine-1-phosphate (GlcN-1-P) to produce N-acetylglucosamine-1-phosphate (GlcNAc-1-P), which is converted into UDP-GlcNAc by the transfer of uridine 5-monophosphate (from uridine 5-triphosphate), a reaction catalyzed by the N-terminal domain. The sequence is that of Bifunctional protein GlmU from Alkaliphilus metalliredigens (strain QYMF).